The chain runs to 774 residues: E3 ubiquitin-protein ligase UHRF1 (774 aa).

Positions 1–78 constitute a Ubiquitin-like domain; the sequence is MWIQVRTMDG…IQLLVRQSLA (78 aa). A phosphoserine mark is found at S76, S91, S93, S95, and S161. The tract at residues 83–120 is disordered; that stretch reads TKERDSELSDSDSGYGVGHSESDKSSTHGEGTADGDDK. Tudor-like stretches follow at residues 129–205 and 212–280; these read GLYK…ARAR and DLEV…IELP. K276 participates in a covalent cross-link: Glycyl lysine isopeptide (Lys-Gly) (interchain with G-Cter in SUMO2). S284 bears the Phosphoserine mark. The segment at 293 to 298 is linker; that stretch reads RKSGPS. S295 is modified (phosphoserine; by PKA). The PHD-type zinc finger occupies 296–363; it reads GPSCQYCKDD…EWYCPSCRTD (68 aa). Histone H3R2me0 binding regions lie at residues 330 to 334 and 350 to 352; these read CDECD and PPE. At S365 the chain carries Phosphoserine. K382 is covalently cross-linked (Glycyl lysine isopeptide (Lys-Gly) (interchain with G-Cter in SUMO2)). The tract at residues 382–605 is methyl-CpG binding and interaction with HDAC1; sequence KMASATSSSR…QLGLTMQYPE (224 aa). The residue at position 396 (K396) is an N6-acetyllysine. Residues 416 to 578 enclose the YDG domain; that stretch reads GPIPGVPVGT…FIVWRYLLRR (163 aa). The segment at 442–443 is required to promote base flipping; that stretch reads HV. DNA-binding positions include 460–461 and D466; that span reads AG. Required for formation of a 5-methylcytosine-binding pocket stretches follow at residues 463 to 466 and 475 to 478; these read YEDD and YTGS. A Phosphoserine modification is found at S511. K542 bears the N6-acetyllysine; alternate mark. K542 participates in a covalent cross-link: Glycyl lysine isopeptide (Lys-Gly) (interchain with G-Cter in SUMO2); alternate. The disordered stretch occupies residues 616-657; sequence KNRKRPAKALEQGPSSSKIGKSKRKSTGPATTSPRVSKKSKL. S631 is modified (phosphoserine; by CDK1). Residues S641 and S648 each carry the phosphoserine modification. K656 is covalently cross-linked (Glycyl lysine isopeptide (Lys-Gly) (interchain with G-Cter in SUMO2)). The RING-type zinc-finger motif lies at 705–744; the sequence is CICCQELVFRPVTTVCQHNVCKDCLDRSFRAQVFSCPACR. S751 is modified (phosphoserine).

As to quaternary structure, interacts with DNMT3A and DNMT3B. Interacts with DNMT1; the interaction is direct. Interacts with USP7; leading to its deubiquitination. Interacts with histone H3. Interacts with HDAC1, but not with HDAC2. Interacts with BLTP3A. Interacts with PML. Interacts with EHMT2. Binds methylated CpG containing oligonucleotides. Interacts with ZNF263; recruited to the SIX3 promoter along with other proteins involved in chromatin modification and transcriptional corepression where it contributes to transcriptional repression. Interacts with UHRF2. Interacts with FANCD2. Interacts with TET1 isoform 2; this interaction induces the recruitment of TET1 isoform 2 to replicating heterochromatin. In terms of processing, phosphorylation at Ser-295 of the linker region decreases the binding to H3K9me3. Phosphorylation at Ser-631 by CDK1 during M phase impairs interaction with USP7, preventing deubiquitination and leading to degradation by the proteasome. Post-translationally, ubiquitinated; which leads to proteasomal degradation. Autoubiquitinated; interaction with USP7 leads to deubiquitination and prevents degradation. Ubiquitination and degradation takes place during M phase, when phosphorylation at Ser-631 prevents interaction with USP7 and subsequent deubiquitination. Polyubiquitination may be stimulated by DNA damage.

The protein resides in the nucleus. It carries out the reaction S-ubiquitinyl-[E2 ubiquitin-conjugating enzyme]-L-cysteine + [acceptor protein]-L-lysine = [E2 ubiquitin-conjugating enzyme]-L-cysteine + N(6)-ubiquitinyl-[acceptor protein]-L-lysine.. It participates in protein modification; protein ubiquitination. Its function is as follows. Multidomain protein that acts as a key epigenetic regulator by bridging DNA methylation and chromatin modification. Specifically recognizes and binds hemimethylated DNA at replication forks via its YDG domain and recruits DNMT1 methyltransferase to ensure faithful propagation of the DNA methylation patterns through DNA replication. In addition to its role in maintenance of DNA methylation, also plays a key role in chromatin modification: through its tudor-like regions and PHD-type zinc fingers, specifically recognizes and binds histone H3 trimethylated at 'Lys-9' (H3K9me3) and unmethylated at 'Arg-2' (H3R2me0), respectively, and recruits chromatin proteins. Enriched in pericentric heterochromatin where it recruits different chromatin modifiers required for this chromatin replication. Also localizes to euchromatic regions where it negatively regulates transcription possibly by impacting DNA methylation and histone modifications. Has E3 ubiquitin-protein ligase activity by mediating the ubiquitination of target proteins such as histone H3 and PML. It is still unclear how E3 ubiquitin-protein ligase activity is related to its role in chromatin in vivo. Plays a role in DNA repair by cooperating with UHRF2 to ensure recruitment of FANCD2 to interstrand cross-links (ICLs) leading to FANCD2 activation. Plays a pivotal role in the establishment of correct spindle architecture by catalyzing the 'Lys-63'-linked ubiquitination of KIF11, thereby controlling KIF11 localization on the spindle. The sequence is that of E3 ubiquitin-protein ligase UHRF1 (Uhrf1) from Rattus norvegicus (Rat).